Here is a 440-residue protein sequence, read N- to C-terminus: Serine hydroxymethyltransferase (440 aa).

(6S)-5,6,7,8-tetrahydrofolate contacts are provided by residues L119 and 123–125 (GHL). K228 is subject to N6-(pyridoxal phosphate)lysine. 370–372 (SPF) serves as a coordination point for (6S)-5,6,7,8-tetrahydrofolate.

Belongs to the SHMT family. In terms of assembly, homodimer. It depends on pyridoxal 5'-phosphate as a cofactor.

It is found in the cytoplasm. The enzyme catalyses (6R)-5,10-methylene-5,6,7,8-tetrahydrofolate + glycine + H2O = (6S)-5,6,7,8-tetrahydrofolate + L-serine. It functions in the pathway one-carbon metabolism; tetrahydrofolate interconversion. Its pathway is amino-acid biosynthesis; glycine biosynthesis; glycine from L-serine: step 1/1. Functionally, catalyzes the reversible interconversion of serine and glycine with tetrahydrofolate (THF) serving as the one-carbon carrier. This reaction serves as the major source of one-carbon groups required for the biosynthesis of purines, thymidylate, methionine, and other important biomolecules. Also exhibits THF-independent aldolase activity toward beta-hydroxyamino acids, producing glycine and aldehydes, via a retro-aldol mechanism. This chain is Serine hydroxymethyltransferase, found in Chloroherpeton thalassium (strain ATCC 35110 / GB-78).